The chain runs to 89 residues: Large ribosomal subunit protein bL28 (89 aa).

This sequence belongs to the bacterial ribosomal protein bL28 family.

The protein is Large ribosomal subunit protein bL28 of Chlamydia caviae (strain ATCC VR-813 / DSM 19441 / 03DC25 / GPIC) (Chlamydophila caviae).